Consider the following 516-residue polypeptide: Maturase K (516 aa).

This sequence belongs to the intron maturase 2 family. MatK subfamily.

The protein resides in the plastid. The protein localises to the chloroplast. Its function is as follows. Usually encoded in the trnK tRNA gene intron. Probably assists in splicing its own and other chloroplast group II introns. The protein is Maturase K of Disporum sessile (Japanese fairy bells).